We begin with the raw amino-acid sequence, 554 residues long: Rab GTPase-binding effector protein 2 (554 aa).

Disordered regions lie at residues 1 to 28 (MAAA…SELS), 167 to 208 (IQRR…GPAA), and 371 to 395 (GLRA…DEAL). Positions 14-28 (PQEKQKDASESSELS) are enriched in basic and acidic residues. Residues 15 to 173 (QEKQKDASES…IQEIQRRPRQ (159 aa)) are a coiled coil. 4 positions are modified to phosphoserine: serine 176, serine 180, serine 187, and serine 191. The stretch at 274-509 (DSQWEQLQVE…QAELETSEQV (236 aa)) forms a coiled coil.

Belongs to the rabaptin family. As to quaternary structure, heterodimer with RABGEF1. The dimer binds RAB5A that has been activated by GTP-binding. Interacts with SDCCAG8; this interaction is important for ciliogenesis regulation. Interacts with RAB4A; this interaction may mediate VEGFR2 cell surface expression.

It localises to the cytoplasm. Its subcellular location is the early endosome. The protein localises to the cytoskeleton. It is found in the microtubule organizing center. The protein resides in the centrosome. It localises to the cilium basal body. Its function is as follows. Plays a role in membrane trafficking and in homotypic early endosome fusion. Participates in arteriogenesis by regulating vascular endothelial growth factor receptor 2/VEGFR2 cell surface expression and endosomal trafficking. By interacting with SDCCAG8, localizes to centrosomes and plays a critical role in ciliogenesis. In Mus musculus (Mouse), this protein is Rab GTPase-binding effector protein 2 (Rabep2).